Consider the following 898-residue polypeptide: Serine/threonine-protein kinase TAO3 (898 aa).

The Protein kinase domain occupies 24 to 277 (FIGLHEIGHG…SAELLRHDFV (254 aa)). ATP contacts are provided by residues 30–38 (IGHGSFGAV) and K53. The active-site Proton acceptor is the D147. 2 disordered regions span residues 316-362 (TRNG…SQSS) and 405-425 (DEAGHGDPRPEPRPTQSVQSQ). A Phosphoserine; by ATM modification is found at S324. S331, S343, S346, and S349 each carry phosphoserine. A compositionally biased stretch (polar residues) spans 334 to 351 (GTSLNREMDSLGSNHSIP). The segment covering 352-362 (SMSVSTGSQSS) has biased composition (low complexity). Phosphothreonine is present on T357. At S359 the chain carries Phosphoserine. A compositionally biased stretch (basic and acidic residues) spans 405–416 (DEAGHGDPRPEP). S442 is modified (phosphoserine). Coiled-coil stretches lie at residues 452–502 (EQEN…THAN), 548–649 (FLES…HAML), and 754–879 (LKTL…DMES). Positions 565–596 (EEMNEDHSTPKKEKQERISKHKENLQHTQAEE) are disordered. K830 is modified (N6-acetyllysine).

The protein belongs to the protein kinase superfamily. STE Ser/Thr protein kinase family. STE20 subfamily. Self-associates. Interacts with ERN1 and TRAF2. Interaction with TRAF2 is facilitated under ER stress conditions, such as treatment with tunicamycin, and may promote TRAF2 phosphorylation. Interacts (via N-terminus) with STK25; the interaction promotes STK25 abundance at the level of protein expression and/or stability. In terms of processing, autophosphorylated. Phosphorylation at Ser-324 by ATM following DNA damage is required for activation of the p38/MAPK14 stress-activated MAPK cascade. Phosphorylated at Ser-324 and on Tyr residues during T cell activation. Phosphorylated by LRRK2.

Its subcellular location is the cytoplasm. It is found in the cell membrane. It localises to the membrane raft. The protein resides in the lipid droplet. It catalyses the reaction L-seryl-[protein] + ATP = O-phospho-L-seryl-[protein] + ADP + H(+). It carries out the reaction L-threonyl-[protein] + ATP = O-phospho-L-threonyl-[protein] + ADP + H(+). In terms of biological role, serine/threonine-protein kinase that acts as a regulator of the p38/MAPK14 stress-activated MAPK cascade and of the MAPK8/JNK cascade. In response to DNA damage, involved in the G2/M transition DNA damage checkpoint by activating the p38/MAPK14 stress-activated MAPK cascade, probably by mediating phosphorylation of upstream MAP2K3 and MAP2K6 kinases. Inhibits basal activity of the MAPK8/JNK cascade and diminishes its activation in response to epidermal growth factor (EGF). Positively regulates canonical T cell receptor (TCR) signaling by preventing early PTPN6/SHP1-mediated inactivation of LCK, ensuring sustained TCR signaling that is required for optimal activation and differentiation of T cells. Phosphorylates PTPN6/SHP1 on 'Thr-394', leading to its polyubiquitination and subsequent proteasomal degradation. Required for cell surface expression of metalloprotease ADAM10 on type 1 transitional B cells which is necessary for their NOTCH-mediated development into marginal zone B cells. Also required for the NOTCH-mediated terminal differentiation of splenic conventional type 2 dendritic cells. Positively regulates osteoblast differentiation by acting as an upstream activator of the JNK pathway. Promotes JNK signaling in hepatocytes and positively regulates hepatocyte lipid storage by inhibiting beta-oxidation and triacylglycerol secretion while enhancing lipid synthesis. Restricts age-associated inflammation by negatively regulating differentiation of macrophages and their production of pro-inflammatory cytokines. Plays a role in negatively regulating the abundance of regulatory T cells in white adipose tissue. The polypeptide is Serine/threonine-protein kinase TAO3 (TAOK3) (Pongo abelii (Sumatran orangutan)).